The primary structure comprises 1165 residues: Serine/threonine-protein kinase/endoribonuclease ireA (1165 aa).

Positions Met-1–Pro-27 are cleaved as a signal peptide. Residues Gln-28 to Asn-504 lie on the Lumenal side of the membrane. Asn-152 is a glycosylation site (N-linked (GlcNAc...) asparagine). A helical membrane pass occupies residues Ala-505–Ser-525. At His-526 to Glu-1165 the chain is on the cytoplasmic side. The segment at Gln-547–Asp-668 is disordered. Basic and acidic residues-rich tracts occupy residues Ala-591–Ser-600 and Lys-611–Asp-620. The segment covering Pro-637–Lys-655 has biased composition (basic residues). Over residues Lys-656–Asp-668 the composition is skewed to basic and acidic residues. One can recognise a Protein kinase domain in the interval Val-711–Phe-1026. Residues Leu-717–Val-725 and Lys-739 each bind ATP. The Proton acceptor role is filled by Asp-832. The segment at Ala-899–Gln-919 is disordered. Residues Pro-1029 to Pro-1163 form the KEN domain.

Belongs to the protein kinase superfamily. Ser/Thr protein kinase family. Homodimer; in response to the accumulation of unfolded proteins. Mg(2+) is required as a cofactor. Post-translationally, autophosphorylated mainly on serine residues.

It is found in the membrane. It catalyses the reaction L-seryl-[protein] + ATP = O-phospho-L-seryl-[protein] + ADP + H(+). The enzyme catalyses L-threonyl-[protein] + ATP = O-phospho-L-threonyl-[protein] + ADP + H(+). Its activity is regulated as follows. 8-formyl-7-hydroxy-4-methylcoumarin inhibits the endonuclease activity and prebvent the splicing if the hacA mRNA. The kinase domain is activated by trans-autophosphorylation. Kinase activity is required for activation of the endoribonuclease domain. In terms of biological role, senses unfolded proteins in the lumen of the endoplasmic reticulum (ER) via its N-terminal domain which leads to enzyme auto-activation. The active endoribonuclease domain responds by cleaving an intron from the downstream cytoplasmic mRNA hacA, allowing for the translation of a transcription factor that coordinates a series of adaptive responses that are collectively known as the unfolded protein response (UPR). In the absence of ER stress, ireA controls dual signaling circuits that are both hacA-dependent and hacA-independent and which contribute to the expression of traits that are essential for virulence. This chain is Serine/threonine-protein kinase/endoribonuclease ireA, found in Aspergillus fumigatus (strain ATCC MYA-4609 / CBS 101355 / FGSC A1100 / Af293) (Neosartorya fumigata).